The sequence spans 335 residues: Protein-lysine N-methyltransferase EEF2KMT (335 aa).

Methionine 1 is modified (N-acetylmethionine). S-adenosyl-L-methionine is bound by residues tryptophan 139, 165–167 (GSG), tryptophan 228, and alanine 247.

The protein belongs to the class I-like SAM-binding methyltransferase superfamily. EEF2KMT family. In terms of assembly, interacts with FAM86B2 and FAM86C1P.

The protein localises to the cytoplasm. The enzyme catalyses L-lysyl-[protein] + 3 S-adenosyl-L-methionine = N(6),N(6),N(6)-trimethyl-L-lysyl-[protein] + 3 S-adenosyl-L-homocysteine + 3 H(+). Functionally, catalyzes the trimethylation of eukaryotic elongation factor 2 (EEF2) on 'Lys-525'. The protein is Protein-lysine N-methyltransferase EEF2KMT (Eef2kmt) of Mus musculus (Mouse).